We begin with the raw amino-acid sequence, 832 residues long: Protein P (832 aa).

The terminal protein domain (TP) stretch occupies residues Met-1–Gln-177. The interval Asp-178–Leu-335 is spacer. 2 disordered regions span residues Ile-186–Gln-218 and Thr-239–Tyr-266. Residues Glu-336–Gln-679 form a polymerase/reverse transcriptase domain (RT) region. Residues Glu-346–Ile-589 enclose the Reverse transcriptase domain. Mg(2+) contacts are provided by Asp-418, Asp-540, and Asp-541.

Belongs to the hepadnaviridae P protein family.

It carries out the reaction DNA(n) + a 2'-deoxyribonucleoside 5'-triphosphate = DNA(n+1) + diphosphate. It catalyses the reaction Endonucleolytic cleavage to 5'-phosphomonoester.. Its activity is regulated as follows. Activated by host HSP70 and HSP40 in vitro to be able to bind the epsilon loop of the pgRNA. Because deletion of the RNase H region renders the protein partly chaperone-independent, the chaperones may be needed indirectly to relieve occlusion of the RNA-binding site by this domain. Inhibited by several reverse-transcriptase inhibitors: Lamivudine, Adefovir and Entecavir. Functionally, multifunctional enzyme that converts the viral RNA genome into dsDNA in viral cytoplasmic capsids. This enzyme displays a DNA polymerase activity that can copy either DNA or RNA templates, and a ribonuclease H (RNase H) activity that cleaves the RNA strand of RNA-DNA heteroduplexes in a partially processive 3'- to 5'-endonucleasic mode. Neo-synthesized pregenomic RNA (pgRNA) are encapsidated together with the P protein, and reverse-transcribed inside the nucleocapsid. Initiation of reverse-transcription occurs first by binding the epsilon loop on the pgRNA genome, and is initiated by protein priming, thereby the 5'-end of (-)DNA is covalently linked to P protein. Partial (+)DNA is synthesized from the (-)DNA template and generates the relaxed circular DNA (RC-DNA) genome. After budding and infection, the RC-DNA migrates in the nucleus, and is converted into a plasmid-like covalently closed circular DNA (cccDNA). The activity of P protein does not seem to be necessary for cccDNA generation, and is presumably released from (+)DNA by host nuclear DNA repair machinery. The sequence is that of Protein P from Homo sapiens (Human).